The sequence spans 157 residues: GTP-dependent dephospho-CoA kinase (157 aa).

Positions 40, 59, 61, 107, and 128 each coordinate GTP.

The protein belongs to the GTP-dependent DPCK family.

It catalyses the reaction 3'-dephospho-CoA + GTP = GDP + CoA + H(+). It functions in the pathway cofactor biosynthesis; coenzyme A biosynthesis. Catalyzes the GTP-dependent phosphorylation of the 3'-hydroxyl group of dephosphocoenzyme A to form coenzyme A (CoA). The sequence is that of GTP-dependent dephospho-CoA kinase from Desulfurococcus amylolyticus (strain DSM 18924 / JCM 16383 / VKM B-2413 / 1221n) (Desulfurococcus kamchatkensis).